A 350-amino-acid polypeptide reads, in one-letter code: Biotin synthase (350 aa).

Positions 41-268 constitute a Radical SAM core domain; that stretch reads NEVQISRLLS…KSRVRLSAGR (228 aa). Cysteine 56, cysteine 60, and cysteine 63 together coordinate [4Fe-4S] cluster. Residues cysteine 100, cysteine 131, cysteine 191, and arginine 263 each contribute to the [2Fe-2S] cluster site.

It belongs to the radical SAM superfamily. Biotin synthase family. As to quaternary structure, homodimer. It depends on [4Fe-4S] cluster as a cofactor. [2Fe-2S] cluster is required as a cofactor.

It carries out the reaction (4R,5S)-dethiobiotin + (sulfur carrier)-SH + 2 reduced [2Fe-2S]-[ferredoxin] + 2 S-adenosyl-L-methionine = (sulfur carrier)-H + biotin + 2 5'-deoxyadenosine + 2 L-methionine + 2 oxidized [2Fe-2S]-[ferredoxin]. It functions in the pathway cofactor biosynthesis; biotin biosynthesis; biotin from 7,8-diaminononanoate: step 2/2. Its function is as follows. Catalyzes the conversion of dethiobiotin (DTB) to biotin by the insertion of a sulfur atom into dethiobiotin via a radical-based mechanism. The protein is Biotin synthase of Shewanella frigidimarina (strain NCIMB 400).